A 576-amino-acid chain; its full sequence is Polypeptide N-acetylgalactosaminyltransferase 12 (576 aa).

Residues 1–19 (MWGRAVRRRCPRGLRRGRE) lie on the Cytoplasmic side of the membrane. A helical; Signal-anchor for type II membrane protein membrane pass occupies residues 20–37 (ALLALLALAGLGALLRAR). The segment at 38–58 (SRSGTVDPGPPRTPLPGRHEP) is disordered. The Lumenal portion of the chain corresponds to 38–576 (SRSGTVDPGP…QRWFFKERMS (539 aa)). 5 cysteine pairs are disulfide-bonded: Cys120–Cys353, Cys344–Cys417, Cys453–Cys474, Cys501–Cys516, and Cys542–Cys561. Residues 130-239 (LPKTSVVIAF…EGWLEPLLQR (110 aa)) form a catalytic subdomain A region. 2 residues coordinate substrate: Asp171 and Arg200. Residues Asp223 and His225 each coordinate Mn(2+). Residues 299-361 (VIRSPTMAGG…PCSHVGHVFP (63 aa)) form a catalytic subdomain B region. Trp330 lines the substrate pocket. Residue His358 coordinates Mn(2+). Tyr366 is a binding site for substrate. One can recognise a Ricin B-type lectin domain in the interval 440 to 572 (FFGMLQNRGL…NSDNQRWFFK (133 aa)).

Belongs to the glycosyltransferase 2 family. GalNAc-T subfamily. Requires Mn(2+) as cofactor.

Its subcellular location is the golgi apparatus membrane. It carries out the reaction L-seryl-[protein] + UDP-N-acetyl-alpha-D-galactosamine = a 3-O-[N-acetyl-alpha-D-galactosaminyl]-L-seryl-[protein] + UDP + H(+). It catalyses the reaction L-threonyl-[protein] + UDP-N-acetyl-alpha-D-galactosamine = a 3-O-[N-acetyl-alpha-D-galactosaminyl]-L-threonyl-[protein] + UDP + H(+). It functions in the pathway protein modification; protein glycosylation. Functionally, catalyzes the initial reaction in O-linked oligosaccharide biosynthesis, the transfer of an N-acetyl-D-galactosamine residue to a serine or threonine residue on the protein receptor. Has activity toward non-glycosylated peptides such as Muc5AC, Muc1a and EA2, and no detectable activity with Muc2 and Muc7. Displays enzymatic activity toward the Gal-NAc-Muc5AC glycopeptide, but no detectable activity to mono-GalNAc-glycosylated Muc1a, Muc2, Muc7 and EA2. May play an important role in the initial step of mucin-type oligosaccharide biosynthesis in digestive organs. The chain is Polypeptide N-acetylgalactosaminyltransferase 12 (Galnt12) from Mus musculus (Mouse).